The sequence spans 397 residues: Elongation factor Tu (397 aa).

The region spanning 10–207 (KPHVNIGTIG…AVDESIPEPV (198 aa)) is the tr-type G domain. The interval 19–26 (GHVDHGKT) is G1. Position 19–26 (19–26 (GHVDHGKT)) interacts with GTP. Thr-26 lines the Mg(2+) pocket. Residues 63 to 67 (GITIN) are G2. The G3 stretch occupies residues 84–87 (DAPG). Residues 84–88 (DAPGH) and 139–142 (NKSD) each bind GTP. The interval 139-142 (NKSD) is G4. Positions 177–179 (SGL) are G5.

Belongs to the TRAFAC class translation factor GTPase superfamily. Classic translation factor GTPase family. EF-Tu/EF-1A subfamily. As to quaternary structure, monomer.

Its subcellular location is the cytoplasm. The enzyme catalyses GTP + H2O = GDP + phosphate + H(+). Its function is as follows. GTP hydrolase that promotes the GTP-dependent binding of aminoacyl-tRNA to the A-site of ribosomes during protein biosynthesis. The sequence is that of Elongation factor Tu from Clavibacter michiganensis subsp. michiganensis (strain NCPPB 382).